The primary structure comprises 404 residues: Voltage-gated potassium channel subunit beta-3 (404 aa).

The segment covering 1 to 14 (MQVSIACTEQNLRS) has biased composition (polar residues). Residues 1-77 (MQVSIACTEQ…LRESTGRGTG (77 aa)) are disordered. Over residues 28-50 (PGGGNGGPAGGGHGNPPGGGGSG) the composition is skewed to gly residues. Thr97, Trp98, Gln104, and Asp126 together coordinate NADP(+). Tyr131 acts as the Proton donor/acceptor in catalysis. Residues Asn199, Ser229, Arg230, Gln255, Trp284, Pro286, Leu287, Ala288, Cys289, Lys295, Arg305, Gly364, Ser366, Gln370, and Glu373 each coordinate NADP(+).

Belongs to the shaker potassium channel beta subunit family. In terms of assembly, forms heteromultimeric complex with alpha subunits. Interacts with KCNA5 and KCNB2. In terms of tissue distribution, brain specific. Most prominent expression in cerebellum. Weaker signals detected in cortex, occipital lobe, frontal lobe and temporal lobe. Not detected in spinal cord, heart, lung, liver, kidney, pancreas, placenta and skeletal muscle.

It is found in the cytoplasm. In terms of biological role, regulatory subunit of the voltage-gated potassium (Kv) channels composed of pore-forming and potassium-conducting alpha subunits and of regulatory beta subunit. The beta-3/KCNAB3 subunit may mediate closure of potassium channels. Increases inactivation of Kv1.5/KCNA5 alpha subunit-containing channels. May display nicotinamide adenine dinucleotide phosphate (NADPH)-dependent aldoketoreductase activity. The binding of oxidized and reduced NADP(H) cofactors may be required for the regulation of potassium channel activity. This chain is Voltage-gated potassium channel subunit beta-3, found in Homo sapiens (Human).